The chain runs to 447 residues: Putative branched-chain amino acid carrier protein SAB1263c (447 aa).

12 consecutive transmembrane segments (helical) span residues 6 to 26, 40 to 60, 74 to 94, 114 to 134, 143 to 163, 193 to 213, 229 to 249, 290 to 310, 326 to 346, 350 to 370, 382 to 402, and 417 to 437; these read WVIG…IFPP, ILAF…VGAL, PKFS…LFAI, SSIA…YICL, IGSL…IKGY, GYLT…VNAV, LTAG…LGYI, LLGI…IGAV, FVLV…NAVI, IPVL…ILIA, IPVI…LGWL, and LEWF…GIFV.

The protein belongs to the branched chain amino acid transporter family.

Its subcellular location is the cell membrane. Its function is as follows. Component of the transport system for branched-chain amino acids (leucine, isoleucine and valine), which is coupled to a proton motive force (Potential). Contributes to NaCl tolerance. This is Putative branched-chain amino acid carrier protein SAB1263c from Staphylococcus aureus (strain bovine RF122 / ET3-1).